The primary structure comprises 149 residues: Large ribosomal subunit protein bL9 (149 aa).

The protein belongs to the bacterial ribosomal protein bL9 family.

Its function is as follows. Binds to the 23S rRNA. This Bacillus velezensis (strain DSM 23117 / BGSC 10A6 / LMG 26770 / FZB42) (Bacillus amyloliquefaciens subsp. plantarum) protein is Large ribosomal subunit protein bL9.